Consider the following 48-residue polypeptide: Large ribosomal subunit protein eL40 (48 aa).

It belongs to the eukaryotic ribosomal protein eL40 family.

In Methanoregula boonei (strain DSM 21154 / JCM 14090 / 6A8), this protein is Large ribosomal subunit protein eL40.